The following is a 135-amino-acid chain: Calcium-binding protein KIC (135 aa).

The EF-hand domain maps to 74–109; sequence MSKEDAQGMVREGDLDGDGALNQTEFCVLMVRLSPE. Positions 87, 89, 91, and 98 each coordinate Ca(2+).

Interacts with KCBP (via C-terminus). KIC and calmodulin show competitive binding to KCBP. Interacts with CML42. Binds to ABCG36. As to expression, expressed in stems, leaves and flowers.

Calcium-binding regulatory protein that interacts with kinesin motor protein KCBP in a calcium-dependent manner. Inhibits KCBP microtubule binding activity and microtubule-stimulated ATPase activity. Involved in the regulation of trichome branching through its interaction with KCBP. The chain is Calcium-binding protein KIC from Arabidopsis thaliana (Mouse-ear cress).